The chain runs to 284 residues: Ribosome-associated protein oga1 (284 aa).

Positions 1 to 284 are disordered; it reads MSVASKNLFD…LSETDFPALA (284 aa). Basic and acidic residues predominate over residues 22–36; it reads TEKKTAASRDKKRSD. 2 positions are modified to phosphoserine: Ser37 and Ser51. 2 stretches are compositionally biased toward basic and acidic residues: residues 52-73 and 119-141; these read RKRD…ADQP and GREF…ERGW. At Thr160 the chain carries Phosphothreonine. Ser162 carries the phosphoserine modification. Thr166 is modified (phosphothreonine). Composition is skewed to basic and acidic residues over residues 172 to 186 and 194 to 209; these read ENVK…ERKS and TVEK…KSAP. Residues 214 to 224 show a composition bias toward low complexity; that stretch reads ASLKKSASQKK. Positions 226–237 are enriched in basic and acidic residues; it reads AAKESKPKKVLL. The segment covering 245-254 has biased composition (low complexity); it reads ARPARGGRPN. The span at 263 to 277 shows a compositional bias: polar residues; sequence ETASKTQQAPPTLSE.

It belongs to the STM1 family. As to quaternary structure, associates with mature 80S ribosomes. Binds to the head domain of the 40S ribosomal subunit and prevents mRNA binding by inserting its alpha-helix domain towards the mRNA entry tunnel at the decoding site, where it blocks the binding of tRNA and mRNA at the A- and P-sites. Interacts with eEF2; interaction sequesters eEF2 at the A-site of the ribosome, thereby blocking the interaction sites of the mRNA-tRNA complex, promoting ribosome stabilization and hibernation. Interacts with sad1. Post-translationally, phosphorylation by TORC1 upon nutrient replenishment inhibits STM1 and causes its release from dormant ribosomes.

Its subcellular location is the cytoplasm. Functionally, ribosome preservation factor that protect a small pool of nontranslating, vacant ribosomes in cells under nutrient starvation conditions. Under nutrient-limiting conditions, cells reduce ribosome biogenesis and degrade ribosomes via autophagy (ribophagy) or proteasomal degradation. To avoid excessive degradation during starvation, STM1 binds to and protects 80S ribosomes from proteasomal degradation. Under nutrient-sufficient conditions, TORC1 phosphorylates and inhibits STM1 to prevent formation of dormant 80S ribosomes. Acts as an inhibitor of mRNA translation by promoting ribosome hibernation: clamps the two ribosomal subunits, thereby preventing their dissociation, and inhibits translation by excluding mRNA-binding. Acts via its association with eEF2, promoting ribosome stabilization and storage in an inactive state. May also repress translation by preventing association of eEF3 with ribosomes. Binds specifically G4 quadruplex (these are four-stranded right-handed helices, stabilized by guanine base quartets) and purine motif triplex (characterized by a third, antiparallel purine-rich DNA strand located within the major groove of a homopurine stretch of duplex DNA) nucleic acid structures. These structures may be present at telomeres or in rRNAs. Extends chronological lifespan when overexpressed. In Schizosaccharomyces pombe (strain 972 / ATCC 24843) (Fission yeast), this protein is Ribosome-associated protein oga1.